A 231-amino-acid polypeptide reads, in one-letter code: Putative N-acetylmannosamine-6-phosphate 2-epimerase (231 aa).

Belongs to the NanE family.

It carries out the reaction an N-acyl-D-glucosamine 6-phosphate = an N-acyl-D-mannosamine 6-phosphate. It functions in the pathway amino-sugar metabolism; N-acetylneuraminate degradation; D-fructose 6-phosphate from N-acetylneuraminate: step 3/5. Converts N-acetylmannosamine-6-phosphate (ManNAc-6-P) to N-acetylglucosamine-6-phosphate (GlcNAc-6-P). This chain is Putative N-acetylmannosamine-6-phosphate 2-epimerase, found in Glaesserella parasuis serovar 5 (strain SH0165) (Haemophilus parasuis).